The primary structure comprises 137 residues: Small ribosomal subunit protein uS12 (137 aa).

Aspartate 89 is subject to 3-methylthioaspartic acid. A disordered region spans residues 105-137 (AGVAGRTQRRSKYGAKRPKAGQAAAPAKGKGKK). Residues 111–123 (TQRRSKYGAKRPK) are compositionally biased toward basic residues. Low complexity predominate over residues 124–137 (AGQAAAPAKGKGKK).

Belongs to the universal ribosomal protein uS12 family. Part of the 30S ribosomal subunit. Contacts proteins S8 and S17. May interact with IF1 in the 30S initiation complex.

With S4 and S5 plays an important role in translational accuracy. Its function is as follows. Interacts with and stabilizes bases of the 16S rRNA that are involved in tRNA selection in the A site and with the mRNA backbone. Located at the interface of the 30S and 50S subunits, it traverses the body of the 30S subunit contacting proteins on the other side and probably holding the rRNA structure together. The combined cluster of proteins S8, S12 and S17 appears to hold together the shoulder and platform of the 30S subunit. The chain is Small ribosomal subunit protein uS12 from Phocaeicola vulgatus (strain ATCC 8482 / DSM 1447 / JCM 5826 / CCUG 4940 / NBRC 14291 / NCTC 11154) (Bacteroides vulgatus).